Reading from the N-terminus, the 222-residue chain is Glutathione-specific gamma-glutamylcyclotransferase 1 (222 aa).

Residues 1–22 show a composition bias toward low complexity; sequence MKQESAAPNTPPTSQSPTPSAQ. The disordered stretch occupies residues 1 to 24; sequence MKQESAAPNTPPTSQSPTPSAQFP. Residue 35–40 participates in substrate binding; it reads IFGYGS. The Proton acceptor role is filled by Glu-115.

The protein belongs to the gamma-glutamylcyclotransferase family. ChaC subfamily. Interacts with NOTCH1 (via extracellular region).

The protein resides in the cytoplasm. The protein localises to the cytosol. It localises to the golgi apparatus. Its subcellular location is the trans-Golgi network. The catalysed reaction is glutathione = L-cysteinylglycine + 5-oxo-L-proline. Catalyzes the cleavage of glutathione into 5-oxo-L-proline and a Cys-Gly dipeptide. Acts specifically on glutathione, but not on other gamma-glutamyl peptides. Glutathione depletion is an important factor for apoptosis initiation and execution. Acts as a pro-apoptotic component of the unfolded protein response pathway by mediating the pro-apoptotic effects of the ATF4-ATF3-DDIT3/CHOP cascade. Negative regulator of Notch signaling pathway involved in embryonic neurogenesis: acts by inhibiting Notch cleavage by furin, maintaining Notch in an immature inactive form, thereby promoting neurogenesis in embryos. The chain is Glutathione-specific gamma-glutamylcyclotransferase 1 from Homo sapiens (Human).